The chain runs to 314 residues: Methionyl-tRNA formyltransferase (314 aa).

112 to 115 (SLLP) is a (6S)-5,6,7,8-tetrahydrofolate binding site.

Belongs to the Fmt family.

It carries out the reaction L-methionyl-tRNA(fMet) + (6R)-10-formyltetrahydrofolate = N-formyl-L-methionyl-tRNA(fMet) + (6S)-5,6,7,8-tetrahydrofolate + H(+). In terms of biological role, attaches a formyl group to the free amino group of methionyl-tRNA(fMet). The formyl group appears to play a dual role in the initiator identity of N-formylmethionyl-tRNA by promoting its recognition by IF2 and preventing the misappropriation of this tRNA by the elongation apparatus. This chain is Methionyl-tRNA formyltransferase, found in Aeromonas salmonicida (strain A449).